The chain runs to 854 residues: Periodic tryptophan protein 2 homolog (854 aa).

WD repeat units lie at residues 9–52 (NLVG…TFPF), 53–93 (ENHK…LHYF), 94–132 (NFKS…EERE), 144–183 (GHFD…GFHP), 188–227 (GHKN…QAGE), 252–291 (NQNS…MLYQ), 294–334 (ITQS…YVLK), 337–376 (SHYD…CIVT), 379–418 (QHTS…NFRT), 422–464 (PSRV…ETLA), 465–504 (GHEG…GIVE), 507–546 (PIPS…QTSL), and 569–608 (SLNK…LIKK). Thr640 is subject to Phosphothreonine. Ser645 is modified (phosphoserine). The WD 14 repeat unit spans residues 668–709 (TRPEIICHGVQFSPSGGAFAAATTEGLMIYSLYNDFLFDPIN).

It belongs to the WD repeat PWP2 family.

This chain is Periodic tryptophan protein 2 homolog, found in Schizosaccharomyces pombe (strain 972 / ATCC 24843) (Fission yeast).